A 304-amino-acid chain; its full sequence is Probable aspartoacylase (304 aa).

Residues His-13 and Glu-16 each contribute to the Zn(2+) site. Residues Arg-55 and 62–63 each bind substrate; that span reads NR. A Zn(2+)-binding site is contributed by His-105. Substrate is bound by residues Glu-163 and Tyr-273.

Belongs to the AspA/AstE family. Aspartoacylase subfamily. Requires Zn(2+) as cofactor.

The catalysed reaction is an N-acyl-L-aspartate + H2O = a carboxylate + L-aspartate. The protein is Probable aspartoacylase of Prochlorococcus marinus (strain MIT 9313).